Reading from the N-terminus, the 157-residue chain is Small ribosomal subunit protein uS7 (157 aa).

It belongs to the universal ribosomal protein uS7 family. Part of the 30S ribosomal subunit. Contacts proteins S9 and S11.

In terms of biological role, one of the primary rRNA binding proteins, it binds directly to 16S rRNA where it nucleates assembly of the head domain of the 30S subunit. Is located at the subunit interface close to the decoding center, probably blocks exit of the E-site tRNA. In Desulfotalea psychrophila (strain LSv54 / DSM 12343), this protein is Small ribosomal subunit protein uS7.